A 384-amino-acid polypeptide reads, in one-letter code: MKKTIYKCVLPLLICILLTGCWDRTEINDIAFVVSSAIDKKKDQYRVAMQIPLVGQLGGQTGGGGGTAGSKTWYVDSASGTTIREANNKLQTSLSRTINTSHRRTVIIGEDMARDGVAPVFDILTRNPQNRLTALILVSRGEARDILNTDVQLEQFPAEMIRELAIIATSRPVFLSRFMSDLVEIGSDPYAPVISASKTKPGGKGKSNLKIDGLAIFKKDRLMDIFKDEHMTAALMLLNQARQPEFIVDLPNQMGQASIQLQKSNASFHAAEKNGKLSMTIEIRAKGIIMENQSTYETRENDQYYIIQKALNRTIKKDVISTVHRLQKLKADPAGFQDRTIRSTATTKNLLKKEWEEVYKDMEVHVVPIVTIEQGGVLYKTISH.

The N-terminal stretch at 1 to 20 (MKKTIYKCVLPLLICILLTG) is a signal peptide. Cys-21 carries the N-palmitoyl cysteine lipid modification. Cys-21 carries S-diacylglycerol cysteine lipidation.

It belongs to the GerABKC lipoprotein family.

The protein localises to the cell membrane. May be involved in spore germination. In Bacillus subtilis (strain 168), this protein is Putative spore germination protein YfkR (yfkR).